The chain runs to 238 residues: Serine protease SplA (238 aa).

The first 38 residues, 1-38 (MNKNVMVKGLTALTILTILTSLGFAENISNQPHSIAKA), serve as a signal peptide directing secretion. Active-site charge relay system residues include histidine 77, aspartate 116, and serine 192.

Belongs to the peptidase S1B family.

It is found in the secreted. The protein is Serine protease SplA (splA) of Staphylococcus aureus (strain COL).